Reading from the N-terminus, the 151-residue chain is UPF0178 protein PST_0536 (151 aa).

This sequence belongs to the UPF0178 family.

The polypeptide is UPF0178 protein PST_0536 (Stutzerimonas stutzeri (strain A1501) (Pseudomonas stutzeri)).